The sequence spans 882 residues: Valine--tRNA ligase (882 aa).

Residues 45–55 carry the 'HIGH' region motif; sequence PNVTGSLHIGH. A 'KMSKS' region motif is present at residues 525–529; sequence KFSKS. Position 528 (K528) interacts with ATP. Residues 812–881 are a coiled coil; sequence EGLIDVAKEK…VLKKGIQNLA (70 aa).

This sequence belongs to the class-I aminoacyl-tRNA synthetase family. ValS type 1 subfamily. In terms of assembly, monomer.

The protein localises to the cytoplasm. It carries out the reaction tRNA(Val) + L-valine + ATP = L-valyl-tRNA(Val) + AMP + diphosphate. In terms of biological role, catalyzes the attachment of valine to tRNA(Val). As ValRS can inadvertently accommodate and process structurally similar amino acids such as threonine, to avoid such errors, it has a 'posttransfer' editing activity that hydrolyzes mischarged Thr-tRNA(Val) in a tRNA-dependent manner. In Leptospira interrogans serogroup Icterohaemorrhagiae serovar copenhageni (strain Fiocruz L1-130), this protein is Valine--tRNA ligase.